Here is a 900-residue protein sequence, read N- to C-terminus: Bifunctional uridylyltransferase/uridylyl-removing enzyme (900 aa).

The interval 1-342 (MPQVDPELFD…PCEQPVQIQP (342 aa)) is uridylyltransferase. The tract at residues 343–705 (LNSRFQLRDG…TTQREFESGS (363 aa)) is uridylyl-removing. In terms of domain architecture, HD spans 461-583 (VDAHTLNLIK…VGDQTHLDYL (123 aa)). 2 ACT domains span residues 706–789 (QIFI…IIQR) and 816–891 (VLEV…DNGR).

Belongs to the GlnD family. Mg(2+) serves as cofactor.

The enzyme catalyses [protein-PII]-L-tyrosine + UTP = [protein-PII]-uridylyl-L-tyrosine + diphosphate. The catalysed reaction is [protein-PII]-uridylyl-L-tyrosine + H2O = [protein-PII]-L-tyrosine + UMP + H(+). Uridylyltransferase (UTase) activity is inhibited by glutamine, while glutamine activates uridylyl-removing (UR) activity. In terms of biological role, modifies, by uridylylation and deuridylylation, the PII regulatory proteins (GlnB and homologs), in response to the nitrogen status of the cell that GlnD senses through the glutamine level. Under low glutamine levels, catalyzes the conversion of the PII proteins and UTP to PII-UMP and PPi, while under higher glutamine levels, GlnD hydrolyzes PII-UMP to PII and UMP (deuridylylation). Thus, controls uridylylation state and activity of the PII proteins, and plays an important role in the regulation of nitrogen assimilation and metabolism. This chain is Bifunctional uridylyltransferase/uridylyl-removing enzyme, found in Pseudomonas aeruginosa (strain UCBPP-PA14).